The chain runs to 102 residues: Protein B1 (102 aa).

Positions 1-102 (MLNDAKQTRA…AQPQPSNNRK (102 aa)) are disordered. Composition is skewed to polar residues over residues 8-17 (TRANPGTSRP) and 51-65 (GKTN…TAGE). The span at 75–88 (KGPRGGKTNTRRTP) shows a compositional bias: basic residues.

Functionally, not known. Encoded on a subgenomic RNA (RNA3) synthesized during replication and which is co-terminal with RNA1. The polypeptide is Protein B1 (B1) (Black beetle virus (BBV)).